The sequence spans 95 residues: Large ribosomal subunit protein bL25 (95 aa).

This sequence belongs to the bacterial ribosomal protein bL25 family. Part of the 50S ribosomal subunit; part of the 5S rRNA/L5/L18/L25 subcomplex. Contacts the 5S rRNA. Binds to the 5S rRNA independently of L5 and L18.

In terms of biological role, this is one of the proteins that binds to the 5S RNA in the ribosome where it forms part of the central protuberance. The chain is Large ribosomal subunit protein bL25 from Haemophilus influenzae (strain PittGG).